The chain runs to 646 residues: Galactofuranosyltransferase GlfT2 (646 aa).

Residues Arg-182, Gln-211, Asn-240, and Asp-267 each coordinate UDP-alpha-D-galactofuranose. The Mn(2+) site is built by Asp-267 and Asp-269. Asp-384 acts as the Proton acceptor in catalysis. A Mn(2+)-binding site is contributed by His-408.

It belongs to the glycosyltransferase 2 family. As to quaternary structure, homotetramer. The cofactor is Mn(2+). Requires Mg(2+) as cofactor.

Its subcellular location is the cell membrane. It carries out the reaction beta-D-galactofuranosyl-(1-&gt;5)-beta-D-galactofuranosyl-(1-&gt;4)-alpha-L-rhamnosyl-(1-&gt;3)-N-acetyl-alpha-D-glucosaminyl-diphospho-trans,octa-cis-decaprenol + 28 UDP-alpha-D-galactofuranose = [beta-D-galactofuranosyl-(1-&gt;5)-beta-D-galactofuranosyl-(1-&gt;6)]14-beta-D-galactofuranosyl-(1-&gt;5)-beta-D-galactofuranosyl-(1-&gt;4)-alpha-L-rhamnopyranosyl-(1-&gt;3)-N-acetyl-alpha-D-glucosaminyl-diphospho-trans,octa-cis-decaprenol + 28 UDP + 28 H(+). Its pathway is cell wall biogenesis; cell wall polysaccharide biosynthesis. Involved in the galactan polymerization of the arabinogalactan (AG) region of the mycolylarabinogalactan-peptidoglycan (mAGP) complex, an essential component of the mycobacteria cell wall. Thus, successively transfers approximately 28 galactofuranosyl (Galf) residues from UDP-galactofuranose (UDP-Galf) onto the galactofuranosyl-galactofuranosyl-rhamnosyl-GlcNAc-diphospho-decaprenol (Galf-Galf-Rha-GlcNAc-PP-C50) acceptor produced by GlfT1, with alternating 1-&gt;5 and 1-&gt;6 links, forming a galactan domain with approximately 30 galactofuranosyl residues. In Mycolicibacterium smegmatis (strain ATCC 700084 / mc(2)155) (Mycobacterium smegmatis), this protein is Galactofuranosyltransferase GlfT2.